Here is a 339-residue protein sequence, read N- to C-terminus: Phosphate acyltransferase (339 aa).

The protein belongs to the PlsX family. Homodimer. Probably interacts with PlsY.

It is found in the cytoplasm. The enzyme catalyses a fatty acyl-[ACP] + phosphate = an acyl phosphate + holo-[ACP]. It participates in lipid metabolism; phospholipid metabolism. Catalyzes the reversible formation of acyl-phosphate (acyl-PO(4)) from acyl-[acyl-carrier-protein] (acyl-ACP). This enzyme utilizes acyl-ACP as fatty acyl donor, but not acyl-CoA. The protein is Phosphate acyltransferase of Helicobacter pylori (strain J99 / ATCC 700824) (Campylobacter pylori J99).